The sequence spans 971 residues: MELNDANLQTLTEFLRKALDPDPTVRRPAEKFLESVEGNQNYPLLLLTLLEKSQDNVIRVCAAVTFKNYIKRNWRVIEDEPNKVSDPDRTAIKANIVNLMLSSPEQIQKQLSDAISIIGREDFPQKWPDLLTEMVTRFRSGDFHIINGVLRTAHSLFKRYRHEFKSNELWSEIKLVLDTFALPLTELFKATIELCQTHATDVNALKVLFSSLTLISKLFYSLNFQDLPEFFEDNMETWMTNFHGLLTLDNKLLQTDDEEEAGLLELLKSQICDNAALYAQKYDEEFQPYLPRFVTAIWNLLVSTGQEVKYDLLVSNAIQFLASVCERPHYKHLFEDQNTLTSICEKVIVPNMEFRSADEEAFEDNSEEYIRRDLEGSDIDTRRRAACDLVRGLCKFFEGPVTAIFSGYVNSMLAEYAKNPGENWKHKDAAIYLVTSLASKAQTQKHGITQANELVNLNEFFVNHILSDLKSHNVNEFPVLKADAIKYVMIFRSQLPKEQLLQAVPLLISHLQAESTVEHTYAAHALERLFTMRGPNNTTLITPVEMAPFTEQLLNNLFKSLALPGSAENEYIMKAIMRTFSLLQEAIVPYIPTLIGQLTHKLLLVSKNPSKPHFNHYLFESLCLSVRITCKANPATVSSFEEALFPVFTEILQNDVQEFLPYVFQVMSLLLEIHSSSIPSSYMALFPHLLQPALWERTGNIPPLVRLLQAYLEKGGATIAASAADKIPGLLGVFQKLIASKANDHQGFYLLNSIIEHMPPESITQYRKQIFILLFQRLQSSKTTKFIKSFLVFVNLYSVKYGAIALQEIFDSIQPKMFGMVLEKIIIPEVQKVSGAVEKKICAVGITKVLTECPAMMDTEYTKLWTPLLQALIGLFELPEDDSIPDDEHFIDIEDTPGYQTAFSQLAFAGKKEHDPIGDAVGNPKILLAQSLHKLSTACPGRVPSMLSTSLNAEALQFLQGYLQAATVQLV.

Residues alanine 29–serine 102 enclose the Importin N-terminal domain.

It belongs to the XPO2/CSE1 family. As to quaternary structure, interacts with cftr.

It is found in the cytoplasm. The protein resides in the nucleus. Its function is as follows. Export receptor for importin alpha. Mediates importin-alpha re-export from the nucleus to the cytoplasm after import substrates have been released into the nucleoplasm. Negatively regulates fluid secretion and plays a role in fluid homeostasis by down-regulating cftr activity. The polypeptide is Exportin-2 (cse1l) (Pagrus major (Red sea bream)).